Consider the following 115-residue polypeptide: Nitrogenase-stabilizing/protective protein NifW (115 aa).

Belongs to the NifW family. In terms of assembly, homotrimer; associates with NifD.

May protect the nitrogenase Fe-Mo protein from oxidative damage. This chain is Nitrogenase-stabilizing/protective protein NifW, found in Rhodopseudomonas palustris (strain BisB18).